The sequence spans 454 residues: tRNA modification GTPase MnmE (454 aa).

Residues R23, E80, and K120 each contribute to the (6S)-5-formyl-5,6,7,8-tetrahydrofolate site. The TrmE-type G domain maps to 216 to 377; it reads GMKVVIAGRP…LRNHLKQSMG (162 aa). N226 provides a ligand contact to K(+). Residues 226-231, 245-251, 270-273, 335-338, and 358-360 contribute to the GTP site; these read NAGKSS, TDIAGTT, DTAG, NKAD, and SAR. S230 serves as a coordination point for Mg(2+). Positions 245, 247, and 250 each coordinate K(+). Position 251 (T251) interacts with Mg(2+). A (6S)-5-formyl-5,6,7,8-tetrahydrofolate-binding site is contributed by K454.

Belongs to the TRAFAC class TrmE-Era-EngA-EngB-Septin-like GTPase superfamily. TrmE GTPase family. In terms of assembly, homodimer. Heterotetramer of two MnmE and two MnmG subunits. Requires K(+) as cofactor.

It is found in the cytoplasm. Its function is as follows. Exhibits a very high intrinsic GTPase hydrolysis rate. Involved in the addition of a carboxymethylaminomethyl (cmnm) group at the wobble position (U34) of certain tRNAs, forming tRNA-cmnm(5)s(2)U34. The sequence is that of tRNA modification GTPase MnmE from Klebsiella pneumoniae subsp. pneumoniae (strain ATCC 700721 / MGH 78578).